The sequence spans 410 residues: MADSSGRGAGKPATGPTNSSSAKKKDKRVQGGRVIESRYLQYEKKTTQKAPAGDGSQTRGKMSEGGRKSSLLQKSKADSSGVGKGDLQSTLLEGHGTAPPDLDLSAINDKSIVKKTPQLAKTISKKPESTSFSAPRKKSPDLSEAMEMMESQTLLLTLLSVKMENNLAEFERRAEKNLLIMCKEKEKLQKKAHELKRRLLLSQRKRELADVLDAQIEMLSPFEAVATRFKEQYRTFATALDTTRHELPVRSIHLEGDGQQLLDALQHELVTTQRLLGELDVGDSEENVQVLDLLSELKDVTAKKDLELRRSFAQVLELSAEASKEAALANQEVWEETQGMAPPSRWYFNQDSACRESGGAPKNTPLSEDDNPGASSAPAQATFISPSEDFSSSSQAEVPPSLSRSGRDLS.

The disordered stretch occupies residues Met1–Leu104. Ala2 carries the N-acetylalanine modification. Ser105 is modified (phosphoserine). A disordered region spans residues Gln118–Ser143. Residues Leu156–Leu208 are a coiled coil. The segment at Ala353–Ser410 is disordered. Polar residues predominate over residues Gly373 to Ile384. Positions Ser385–Ser394 are enriched in low complexity.

Belongs to the HAUS8 family. In terms of assembly, component of the HAUS augmin-like complex. The complex interacts with the gamma-tubulin ring complex and this interaction is required for spindle assembly. Associates with microtubules. The interaction with microtubules is strong during mitosis, while it is weak or absent during interphase. It is unclear whether this interaction is direct or indirect. Interacts with EML3 (phosphorylated at 'Thr-881') and TUBG1.

The protein resides in the cytoplasm. It localises to the cytoskeleton. The protein localises to the microtubule organizing center. It is found in the centrosome. Its subcellular location is the spindle. The protein resides in the spindle pole. In terms of biological role, contributes to mitotic spindle assembly, maintenance of centrosome integrity and completion of cytokinesis as part of the HAUS augmin-like complex. The polypeptide is HAUS augmin-like complex subunit 8 (HAUS8) (Homo sapiens (Human)).